The following is a 72-amino-acid chain: Translation initiation factor IF-1 (72 aa).

The S1-like domain occupies 1–72; sequence MSKEDSFEME…SKGRITYRAR (72 aa).

This sequence belongs to the IF-1 family. In terms of assembly, component of the 30S ribosomal translation pre-initiation complex which assembles on the 30S ribosome in the order IF-2 and IF-3, IF-1 and N-formylmethionyl-tRNA(fMet); mRNA recruitment can occur at any time during PIC assembly.

Its subcellular location is the cytoplasm. Its function is as follows. One of the essential components for the initiation of protein synthesis. Stabilizes the binding of IF-2 and IF-3 on the 30S subunit to which N-formylmethionyl-tRNA(fMet) subsequently binds. Helps modulate mRNA selection, yielding the 30S pre-initiation complex (PIC). Upon addition of the 50S ribosomal subunit IF-1, IF-2 and IF-3 are released leaving the mature 70S translation initiation complex. This chain is Translation initiation factor IF-1, found in Pseudomonas syringae pv. tomato (strain ATCC BAA-871 / DC3000).